A 76-amino-acid chain; its full sequence is Large ribosomal subunit protein eL20 (76 aa).

Belongs to the eukaryotic ribosomal protein eL20 family. In terms of assembly, part of the 50S ribosomal subunit. Binds 23S rRNA.

The polypeptide is Large ribosomal subunit protein eL20 (Methanococcus maripaludis (strain C6 / ATCC BAA-1332)).